Consider the following 105-residue polypeptide: Protein S100-A11 (105 aa).

At methionine 1 the chain carries N-acetylmethionine. The residue at position 2 (alanine 2) is an N-acetylalanine; in Protein S100-A11, N-terminally processed. Residue lysine 3 is modified to N6-acetyllysine. 2 positions are modified to phosphoserine: serine 5 and serine 6. Threonine 10 is modified (phosphothreonine). 2 consecutive EF-hand domains span residues 13–49 and 55–90; these read CIESLIAVFQKYAGKDGYNYTLSKTEFLSFMNTELAA and KDPGVLDRMMKKLDTNSDGQLDFSEFLNLIGGLAMA. An N6-acetyllysine modification is found at lysine 27. Ca(2+)-binding residues include threonine 33, glutamate 38, aspartate 68, asparagine 70, aspartate 72, glutamine 74, and glutamate 79.

The protein belongs to the S-100 family. As to quaternary structure, homodimer; disulfide-linked. Phosphorylation at Thr-10 by PRKCA significantly suppresses homodimerization and promotes association with NCL/nucleolin which induces nuclear translocation.

Its subcellular location is the cytoplasm. The protein resides in the nucleus. Its function is as follows. Facilitates the differentiation and the cornification of keratinocytes. The protein is Protein S100-A11 (S100A11) of Homo sapiens (Human).